The primary structure comprises 308 residues: Dioxygenase peniF (308 aa).

2 residues coordinate Fe cation: His144 and His225.

This sequence belongs to the PhyH family. In terms of assembly, homodimer. It depends on Fe cation as a cofactor.

Dioxygenase; part of the gene cluster that mediates the biosynthesis of penifulvin A, a potent insecticidal sesquiterpene that features a [5.5.5.6]dioxafenestrane ring. The first step of the pathway is performed by the sesquiterpene cyclase peniA that generates the angular triquinane scaffold silphinene via cyclization of the linear farnesyl pyrophosphate (FPP). The cytochrome P450 monooxygenase peniB and the flavin-dependent monooxygenase peniC then catalyze a series of oxidation reactions to transform silphinene into penifulvin A. The dioxygenases peniD and peniF, as well as the acetyltransferase peniE, do not seem to be involved in the biosynthesis of penifulvin A. The sequence is that of Dioxygenase peniF from Penicillium patulum (Penicillium griseofulvum).